We begin with the raw amino-acid sequence, 171 residues long: MSDSASNTEDSIQIEIFPSRILSPETAQKLMGEIYKVDGVIRVMVQGNRLPDRVSAGPGTGEKVEHPLRKPIQIGDQVIELKICVGRIRVELSNAEAKEQIREVCEKLLPFPFEFREGHFLRKKPTVTDYAKLGPEADPRLLGMVDPKAKTDQLIFIEKQKEQEEDKDKDE.

MCR is composed of three subunits: alpha, beta, and gamma. The function of proteins C and D is not known.

This is Methyl-coenzyme M reductase operon protein D (mcrD) from Methanosarcina barkeri (strain Fusaro / DSM 804).